The primary structure comprises 344 residues: uncharacterized protein (344 aa).

Belongs to the glycosyltransferase 2 family.

This is an uncharacterized protein from Escherichia coli (strain K12).